Consider the following 110-residue polypeptide: MNTQNIVEKTHEKFSSTWSYLEQTSTDLKQNLRSRLLGLDSLLRELYKQETDEKKKMYIFYALMYVDSALDNLDYMNPEHDPFAVFQAKWAVQKAFEIFSDLFKDYFKSD.

This is an uncharacterized protein from Acidianus convivator (ABV).